The sequence spans 140 residues: Hemoglobin subunit alpha (140 aa).

The 140-residue stretch at 1 to 140 (LSAADKGHVK…VSTVLTSKYR (140 aa)) folds into the Globin domain. The residue at position 2 (S2) is a Phosphoserine. An N6-succinyllysine mark is found at K6 and K10. K15 is subject to N6-acetyllysine; alternate. Residue K15 is modified to N6-succinyllysine; alternate. At Y23 the chain carries Phosphotyrosine. S34 is modified (phosphoserine). K39 carries the post-translational modification N6-succinyllysine. Phosphoserine is present on S48. H57 serves as a coordination point for O2. Residue H86 coordinates heme b. Residue S101 is modified to Phosphoserine. The residue at position 107 (T107) is a Phosphothreonine. Residue S123 is modified to Phosphoserine. Phosphothreonine occurs at positions 133 and 136. S137 is modified (phosphoserine).

It belongs to the globin family. Heterotetramer of two alpha chains and two beta chains. As to expression, red blood cells.

In terms of biological role, involved in oxygen transport from the lung to the various peripheral tissues. Hemopressin acts as an antagonist peptide of the cannabinoid receptor CNR1. Hemopressin-binding efficiently blocks cannabinoid receptor CNR1 and subsequent signaling. This is Hemoglobin subunit alpha (HBA) from Tragelaphus strepsiceros (Greater kudu).